We begin with the raw amino-acid sequence, 393 residues long: Bifunctional enzyme Fae/Hps (393 aa).

The interval 1–161 is formaldehyde-activating enzyme; that stretch reads MYLVGEALIG…YEKDRAAHGI (161 aa). Histidine 17 serves as the catalytic Proton donor. Substrate-binding residues include aspartate 19, leucine 48, lysine 66, threonine 68, and glutamine 83. The interval 162–393 is 3-hexulose-6-phosphate synthase; the sequence is MGFKVQRLWD…IDQFRIMTDF (232 aa).

The protein in the N-terminal section; belongs to the formaldehyde-activating enzyme family. In the C-terminal section; belongs to the HPS/KGPDC family. HPS subfamily.

The enzyme catalyses 5,6,7,8-tetrahydromethanopterin + formaldehyde = 5,10-methylenetetrahydromethanopterin + H2O. It catalyses the reaction D-ribulose 5-phosphate + formaldehyde = D-arabino-hex-3-ulose 6-phosphate. The protein operates within carbohydrate biosynthesis; D-ribose 5-phosphate biosynthesis. Functionally, catalyzes the condensation of formaldehyde with tetrahydromethanopterin (H(4)MPT) to 5,10-methylenetetrahydromethanopterin. In terms of biological role, catalyzes the reversible formation of ribulose-5-phosphate and formaldehyde from 3-hexulose-6-phosphate. The chain is Bifunctional enzyme Fae/Hps from Methanoregula boonei (strain DSM 21154 / JCM 14090 / 6A8).